The primary structure comprises 339 residues: Undecaprenyl-phosphate 4-deoxy-4-formamido-L-arabinose transferase (339 aa).

The next 2 helical transmembrane spans lie at 235–255 (LSLVGGGMALAGFLFALFLLV) and 269–289 (LFVLFAVLFMFSGVQLLGMGL).

This sequence belongs to the glycosyltransferase 2 family.

Its subcellular location is the cell inner membrane. It catalyses the reaction UDP-4-deoxy-4-formamido-beta-L-arabinose + di-trans,octa-cis-undecaprenyl phosphate = 4-deoxy-4-formamido-alpha-L-arabinopyranosyl di-trans,octa-cis-undecaprenyl phosphate + UDP. The protein operates within glycolipid biosynthesis; 4-amino-4-deoxy-alpha-L-arabinose undecaprenyl phosphate biosynthesis; 4-amino-4-deoxy-alpha-L-arabinose undecaprenyl phosphate from UDP-4-deoxy-4-formamido-beta-L-arabinose and undecaprenyl phosphate: step 1/2. It participates in bacterial outer membrane biogenesis; lipopolysaccharide biosynthesis. Its function is as follows. Catalyzes the transfer of 4-deoxy-4-formamido-L-arabinose from UDP to undecaprenyl phosphate. The modified arabinose is attached to lipid A and is required for resistance to polymyxin and cationic antimicrobial peptides. The sequence is that of Undecaprenyl-phosphate 4-deoxy-4-formamido-L-arabinose transferase from Pseudomonas paraeruginosa (strain DSM 24068 / PA7) (Pseudomonas aeruginosa (strain PA7)).